Here is a 1698-residue protein sequence, read N- to C-terminus: Bromodomain adjacent to zinc finger domain protein 2A (1698 aa).

Disordered stretches follow at residues 240-262 (QSTPNPLLPPDVSNLDDPSQLPS) and 352-387 (VMQESASEMGEDPEGSKAEEPVSGPENVSQDEMTIE). The span at 377-387 (ENVSQDEMTIE) shows a compositional bias: polar residues. The MBD domain occupies 418 to 489 (IATPEQVCFP…EHFSFSPRMP (72 aa)). 2 disordered regions span residues 524 to 550 (RGRPRNLEKAKAKEQKAKRGRGRPPKV) and 610 to 653 (EKEE…DRKL). A compositionally biased stretch (basic and acidic residues) spans 528-540 (RNLEKAKAKEQKA). The a.T hook 1 DNA-binding region spans 541–553 (KRGRGRPPKVKMI). Positions 579 to 638 (VQLCKLKKKMRRKARNQEAKLEAAKKLKEIKEKEEKKQKIQKAKNQEKAKNQEKKRTRRQ) form a coiled coil. The span at 610 to 632 (EKEEKKQKIQKAKNQEKAKNQEK) shows a compositional bias: basic and acidic residues. Residues 701-766 (SCAFSDCLTT…LQAAMINPGL (66 aa)) form the DDT domain. Disordered regions lie at residues 884 to 905 (ITTTEVSLRRRSERNAEENDEL), 1013 to 1063 (SFGS…PLTN), 1088 to 1110 (TVLTPESSPPHSESTPIISSEAT), and 1123 to 1149 (TPCRNHNQGLSTHSSNRLSPPSPTAAT). The segment covering 890–900 (SLRRRSERNAE) has biased composition (basic and acidic residues). Polar residues-rich tracts occupy residues 1023 to 1040 (HPRNSTAEPEQNSTSCHC) and 1051 to 1063 (VTDQFPNSVPLTN). The segment covering 1091–1108 (TPESSPPHSESTPIISSE) has biased composition (low complexity). The span at 1124 to 1149 (PCRNHNQGLSTHSSNRLSPPSPTAAT) shows a compositional bias: polar residues. A DNA-binding region (a.T hook 3) is located at residues 1204–1216 (EKRRGRRPSKLLK). The PHD-type zinc-finger motif lies at 1476-1526 (KVTCLYCRKGDNDELLLLCDSCDRGCHTYCHRPRMNEIPEGDWFCPTCISL). Positions 1549-1587 (FTEDSPSKPSRRREHPTASQFSPGESPASKKRRMGTRSQ) are disordered. The 105-residue stretch at 1585–1689 (RSQSPDLTFC…KFYDARWEEF (105 aa)) folds into the Bromo domain.

The protein belongs to the WAL family. In terms of assembly, component of the NoRC complex, at least composed of SMARCA5/SNF2H and BAZ2A/TIP5.

It localises to the nucleus. The protein resides in the nucleolus. Its function is as follows. Essential component of the NoRC (nucleolar remodeling complex) complex, a complex that mediates silencing of a fraction of rDNA by recruiting histone-modifying enzymes and DNA methyltransferases, leading to heterochromatin formation and transcriptional silencing. In the complex, it plays a central role by being recruited to rDNA and by targeting chromatin modifying enzymes such as HDAC1, leading to repress RNA polymerase I transcription. Recruited to rDNA via its interaction with TTF1 and its ability to recognize and bind histone H4 acetylated on 'Lys-16' (H4K16ac), leading to deacetylation of H4K5ac, H4K8ac, H4K12ac but not H4K16ac. Specifically binds pRNAs, 150-250 nucleotide RNAs that are complementary in sequence to the rDNA promoter; pRNA-binding is required for heterochromatin formation and rDNA silencing. This Xenopus laevis (African clawed frog) protein is Bromodomain adjacent to zinc finger domain protein 2A (baz2a).